The primary structure comprises 170 residues: NAD(P)H-quinone oxidoreductase subunit I, chloroplastic (170 aa).

4Fe-4S ferredoxin-type domains follow at residues 55-84 (GRIHFEFDKCIACEVCVRACPIDLPVVDWK) and 95-124 (LNYSIDFGICIFCGNCVEYCPTNCLSMTEE). 8 residues coordinate [4Fe-4S] cluster: cysteine 64, cysteine 67, cysteine 70, cysteine 74, cysteine 104, cysteine 107, cysteine 110, and cysteine 114.

It belongs to the complex I 23 kDa subunit family. NDH is composed of at least 16 different subunits, 5 of which are encoded in the nucleus. Requires [4Fe-4S] cluster as cofactor.

The protein resides in the plastid. Its subcellular location is the chloroplast thylakoid membrane. It catalyses the reaction a plastoquinone + NADH + (n+1) H(+)(in) = a plastoquinol + NAD(+) + n H(+)(out). It carries out the reaction a plastoquinone + NADPH + (n+1) H(+)(in) = a plastoquinol + NADP(+) + n H(+)(out). NDH shuttles electrons from NAD(P)H:plastoquinone, via FMN and iron-sulfur (Fe-S) centers, to quinones in the photosynthetic chain and possibly in a chloroplast respiratory chain. The immediate electron acceptor for the enzyme in this species is believed to be plastoquinone. Couples the redox reaction to proton translocation, and thus conserves the redox energy in a proton gradient. The chain is NAD(P)H-quinone oxidoreductase subunit I, chloroplastic from Spinacia oleracea (Spinach).